Reading from the N-terminus, the 112-residue chain is Large ribosomal subunit protein uL22 (112 aa).

This sequence belongs to the universal ribosomal protein uL22 family. In terms of assembly, part of the 50S ribosomal subunit.

This protein binds specifically to 23S rRNA; its binding is stimulated by other ribosomal proteins, e.g. L4, L17, and L20. It is important during the early stages of 50S assembly. It makes multiple contacts with different domains of the 23S rRNA in the assembled 50S subunit and ribosome. Functionally, the globular domain of the protein is located near the polypeptide exit tunnel on the outside of the subunit, while an extended beta-hairpin is found that lines the wall of the exit tunnel in the center of the 70S ribosome. In Anaplasma phagocytophilum (strain HZ), this protein is Large ribosomal subunit protein uL22.